A 365-amino-acid chain; its full sequence is Transcription factor KUA1 (365 aa).

A disordered region spans residues 1 to 21 (MTRRCSHCNHNGHNSRTCPNR). A CCHC-type zinc finger spans residues 3–20 (RRCSHCNHNGHNSRTCPN). Residues 8–18 (CNHNGHNSRTC) show a composition bias toward polar residues. Positions 24 to 28 (KLFGV) match the R/KLFGV (transcriptional repression) motif. Residues 41 to 99 (MGNLSHYTGSGSGGHGTGSNTPGSPGDVPDHVAGDGYASEDFVAGSSSSRERKKGTPWT) are disordered. Residues 90–146 (RERKKGTPWTEEEHRMFLLGLQKLGKGDWRGISRNYVTTRTPTQVASHAQKYFIRQS) form the HTH myb-type domain. Residues 118–142 (WRGISRNYVTTRTPTQVASHAQKYF) constitute a DNA-binding region (H-T-H motif). Disordered stretches follow at residues 214-254 (SMDS…QPQL) and 321-365 (ESNK…IHAL). The span at 220–254 (STTGEPTATAAAASSSSRLEETTQLQSQLQPQPQL) shows a compositional bias: low complexity. The segment covering 343-355 (RQSAFHPNPSSDS) has biased composition (polar residues).

In terms of tissue distribution, expressed ubiquitously, except in hypocotyls, root tips and lateral root primordia.

It is found in the nucleus. Its function is as follows. Transcriptional repressor. Direct regulator of the transcription of peroxidase (Prxs) and reactive oxygen species (ROS)-related genes via the recognition of 5'-ATCACA-3' motif. Binds to 5'-TATCCA-3' motif (TA box) and represses the activity of corresponding promoters (e.g. sugar response genes). Regulates hypocotyl elongation in response to darkness by enhancing auxin accumulation in a phytochrome-interacting factor (PIF) proteins-dependent manner. Promotes lateral roots formation. Promotes cell expansion during leaves development via the modulation of cell wall-located Prxs. Plays a critical role in developmentally regulated and dark-induced onset of leaf senescence by repressing the transcription of several genes involved in chloroplast function and responses to light and auxin. Promotes responses to auxin, abscisic acid (ABA), and ethylene. The polypeptide is Transcription factor KUA1 (Arabidopsis thaliana (Mouse-ear cress)).